A 311-amino-acid chain; its full sequence is 2-dehydro-3-deoxygluconokinase (311 aa).

Residues 34-35 (GS), 106-108 (YYR), and R166 each bind substrate. ATP contacts are provided by residues 164-166 (NIR), 224-229 (KLGPKG), 253-256 (GAGD), and S283. Residues G253 and D256 each coordinate substrate. D256 (proton acceptor) is an active-site residue. D292 is a substrate binding site.

Belongs to the carbohydrate kinase PfkB family. Homotetramer. Requires a divalent metal cation as cofactor.

It catalyses the reaction 2-dehydro-3-deoxy-D-gluconate + ATP = 2-dehydro-3-deoxy-6-phospho-D-gluconate + ADP + H(+). It functions in the pathway carbohydrate acid metabolism; 2-dehydro-3-deoxy-D-gluconate degradation; D-glyceraldehyde 3-phosphate and pyruvate from 2-dehydro-3-deoxy-D-gluconate: step 1/2. Its function is as follows. Involved in the degradation of glucose via the semi-phosphorylative Entner-Doudoroff pathway. Catalyzes the phosphorylation of 2-keto-3-deoxygluconate (KDG) to produce 2-keto-3-deoxy-6-phosphogluconate (KDPG). Can also use GTP, but not ADP or AMP, as a phosphoryl donor and 2-keto-D-gluconate (KG) as a phosphoryl acceptor. The protein is 2-dehydro-3-deoxygluconokinase of Sulfurisphaera tokodaii (strain DSM 16993 / JCM 10545 / NBRC 100140 / 7) (Sulfolobus tokodaii).